The chain runs to 227 residues: Ornithine decarboxylase antizyme 1 (227 aa).

It belongs to the ODC antizyme family. Interacts with ODC1 and thereby sterically blocks ODC homodimerization. Forms a ternary complex with PSMB4 and OAZ1 before PSMB4 is incorporated into the 20S proteasome. Interacts with AZIN2; this interaction disrupts the interaction between the antizyme and ODC1. Interacts with FAM171A1.

In terms of biological role, ornithine decarboxylase (ODC) antizyme protein that negatively regulates ODC activity and intracellular polyamine biosynthesis and uptake in response to increased intracellular polyamine levels. Binds to ODC monomers, inhibiting the assembly of the functional ODC homodimer, and targets the monomers for ubiquitin-independent proteolytic destruction by the 26S proteasome. Triggers ODC degradation by inducing the exposure of a cryptic proteasome-interacting surface of ODC. Stabilizes AZIN2 by interfering with its ubiquitination. Also inhibits cellular uptake of polyamines by inactivating the polyamine uptake transporter. SMAD1/OAZ1/PSMB4 complex mediates the degradation of the CREBBP/EP300 repressor SNIP1. Involved in the translocation of AZIN2 from ER-Golgi intermediate compartment (ERGIC) to the cytosol. The protein is Ornithine decarboxylase antizyme 1 (Oaz1) of Rattus norvegicus (Rat).